A 305-amino-acid chain; its full sequence is Oxidoreductase swnR (305 aa).

This sequence belongs to the NmrA-type oxidoreductase family. Isoflavone reductase subfamily.

The catalysed reaction is L-pipecolate + O2 = L-1-piperideine-6-carboxylate + H2O2 + H(+). Its pathway is mycotoxin biosynthesis. Oxidoreductase; part of the gene cluster that mediates the biosynthesis of swainsonine (SW), a cytotoxic fungal alkaloid and a potential cancer therapy drug. Swainsonine production occurs via a multibranched pathway and is dispensable for fungal colonization of plants and infection of insect hosts. The first step of swainsonine biosynthesis is the production of the precursor pipecolic acid (PA) via conversion of L-lysine (Lys) to 1-piperideine-6-carboxylate (P6C) by the aminotransferase swnA, the latter being further reduced to PA by the reductase swnR. The PKS-NRPS hybrid synthetase swnK uptakes and condensates PA and malonyl-CoA with and without skipping of the ketoreductase (KR) domain in order to produce 3 intermediates, 1-oxoindolizidine, (1S)-1-hydroxyindolizin, and (1R)-1-hydroxyindolizine; with the transisomer (1S)-1-hydroxyindolizin being predominant. The terminal thioester reductase (TE) domain of swnK is involved in reduction of the thioester bond to release the intermediate aldehydes. The oxidoreductase swnN could contribute to the reduction of 1-oxoindolizidine to (1S)-1-hydroxyindolizin and (1R)-1-hydroxyindolizine, contributing to the major route of SW production. The dioxygenase swnH2 would be responsible for the oxidization of (1R)-1-hydroxyindolizine into (1R,2S)-1,2-dihydroxyindolizine and of (1S)-1-hydroxyindolizin to yield both (1R,2S)-1,2-dihydroxyindolizine and (1S,2S)-1,2-dihydroxyindolizine. The dioxygenase swnH1 then performs the conversion of the 1,2-dihydroxyindolizine epimers to SW. In Arthroderma benhamiae (strain ATCC MYA-4681 / CBS 112371) (Trichophyton mentagrophytes), this protein is Oxidoreductase swnR.